The chain runs to 334 residues: N-acetyl-gamma-glutamyl-phosphate reductase (334 aa).

Residue Cys-154 is part of the active site.

Belongs to the NAGSA dehydrogenase family. Type 1 subfamily.

It localises to the cytoplasm. It carries out the reaction N-acetyl-L-glutamate 5-semialdehyde + phosphate + NADP(+) = N-acetyl-L-glutamyl 5-phosphate + NADPH + H(+). It participates in amino-acid biosynthesis; L-arginine biosynthesis; N(2)-acetyl-L-ornithine from L-glutamate: step 3/4. Catalyzes the NADPH-dependent reduction of N-acetyl-5-glutamyl phosphate to yield N-acetyl-L-glutamate 5-semialdehyde. The sequence is that of N-acetyl-gamma-glutamyl-phosphate reductase from Shigella flexneri.